The sequence spans 201 residues: Recombination protein RecR (201 aa).

The segment at 57–72 (CECCRTLTEEPLCRIC) adopts a C4-type zinc-finger fold. One can recognise a Toprim domain in the interval 81-176 (GVLCIVETPA…NTTRIAHGVP (96 aa)).

This sequence belongs to the RecR family.

Its function is as follows. May play a role in DNA repair. It seems to be involved in an RecBC-independent recombinational process of DNA repair. It may act with RecF and RecO. The protein is Recombination protein RecR of Idiomarina loihiensis (strain ATCC BAA-735 / DSM 15497 / L2-TR).